We begin with the raw amino-acid sequence, 472 residues long: WASH complex subunit 1 (472 aa).

Positions 1–51 (MPQNRSMESQAYSLPLILPDLRREEAIHQITDTLQHLQTVSNDIFSRILQR) are required for WASH complex assembly. 3 disordered regions span residues 289-365 (ENSR…SDGR), 377-412 (GIGKAKLRNVKEKKLEKKKMKEQEQVRATGGGGDLM), and 426-472 (ISGK…DWES). Pro residues-rich tracts occupy residues 301–319 (LPPPPPPPPPPPPPPPPEP) and 327–336 (SLAPPLPIPA). Residues 352 to 472 (QGAPKEVVNP…GDGDEEDWES (121 aa)) form a VCA region. Residues 364–386 (GRASLLESIRQAGGIGKAKLRNV) enclose the WH2 domain. Positions 385 to 401 (NVKEKKLEKKKMKEQEQ) are enriched in basic and acidic residues.

This sequence belongs to the WASH1 family. In terms of assembly, component of the WASH complex.

The protein resides in the early endosome membrane. It is found in the recycling endosome membrane. Its function is as follows. Acts as a nucleation-promoting factor at the surface of endosomes, where it recruits and activates the Arp2/3 complex to induce actin polymerization, playing a key role in the fission of tubules that serve as transport intermediates during endosome sorting. This Xenopus tropicalis (Western clawed frog) protein is WASH complex subunit 1.